Consider the following 528-residue polypeptide: Nucleobase-ascorbate transporter 5 (528 aa).

Positions 1 to 20 (MSAPKSGGDPLPHPPKEQLP) are disordered. The next 12 membrane-spanning stretches (helical) occupy residues 35–55 (AVLLGFQHYLVMLGTTVLIPS), 71–91 (LIQTILFVAGLNTLLQTVFGT), 93–113 (LPAVIGASYTFVPVTISIMLS), 133–153 (TQGALIVASTLQIILGFSGLW), 159–179 (FLSPLSAAPLVGLVGYGLYEL), 181–201 (FPGVAKCIEIGLPGLIILILI), 219–239 (FAVIFSVAIVWLYAFFLTLGG), 285–305 (FAMMMASFVALVESTGAFIAV), 367–387 (AGFMIFFSILGKFGAVFASIP), 390–410 (IIAALYCLFFAYVGAGGLSLL), 418–438 (FRTLFILGFSIFLGLSIPQYF), and 460–479 (MVNVPFSSKAFVGGCVAYLL).

This sequence belongs to the nucleobase:cation symporter-2 (NCS2) (TC 2.A.40) family. As to expression, weakly expressed in the vasculature of developing leaves.

Its subcellular location is the membrane. In Arabidopsis thaliana (Mouse-ear cress), this protein is Nucleobase-ascorbate transporter 5 (NAT5).